Here is a 315-residue protein sequence, read N- to C-terminus: Large ribosomal subunit protein uL29m (315 aa).

This sequence belongs to the universal ribosomal protein uL29 family. Component of the mitochondrial large ribosomal subunit. Mature mitochondrial ribosomes consist of a small (37S) and a large (54S) subunit. The 37S subunit contains at least 33 different proteins and 1 molecule of RNA (15S). The 54S subunit contains at least 45 different proteins and 1 molecule of RNA (21S).

Its subcellular location is the mitochondrion. The chain is Large ribosomal subunit protein uL29m (MRPL4) from Candida glabrata (strain ATCC 2001 / BCRC 20586 / JCM 3761 / NBRC 0622 / NRRL Y-65 / CBS 138) (Yeast).